The sequence spans 918 residues: DNA repair and recombination protein RAD54B (918 aa).

The span at 1–11 (MRRSAAPSQVL) shows a compositional bias: polar residues. Positions 1-29 (MRRSAAPSQVLGNVAKKPRFIPPGKSNAL) are disordered. The 168-residue stretch at 320 to 487 (GMRVSGRFGA…YALIEFVNPG (168 aa)) folds into the Helicase ATP-binding domain. 333–340 (DEMGLGKT) provides a ligand contact to ATP. The DEGH box signature appears at 438 to 441 (DEGH). The 165-residue stretch at 653–817 (VLVKLLAAIR…HIHFSVEELR (165 aa)) folds into the Helicase C-terminal domain. A disordered region spans residues 842–873 (KDHQNPSSKKPSVSRCCQLRQDQGKHNSKKPL).

Belongs to the SNF2/RAD54 helicase family.

Its subcellular location is the nucleus. In terms of biological role, involved in DNA repair and mitotic recombination. The chain is DNA repair and recombination protein RAD54B (RAD54B) from Gallus gallus (Chicken).